Here is an 84-residue protein sequence, read N- to C-terminus: Beta-defensin 119 (84 aa).

Residues 1-21 (MKFLFLFLAILLATKIPVISG) form the signal peptide. 3 disulfides stabilise this stretch: C28-C55, C35-C49, and C39-C56.

This sequence belongs to the beta-defensin family.

It is found in the secreted. Has antibacterial activity. In Macaca fascicularis (Crab-eating macaque), this protein is Beta-defensin 119 (DEFB119).